Consider the following 507-residue polypeptide: Ribosomal protein uS12 methylthiotransferase RimO (507 aa).

The 112-residue stretch at 13-124 (RRVALLTLGC…ISDRLGAVLA (112 aa)) folds into the MTTase N-terminal domain. The [4Fe-4S] cluster site is built by Cys22, Cys58, and Cys87. The disordered stretch occupies residues 150–175 (AAVSLPGHGTRAAAAGPGGRSAPVEV). The span at 155 to 172 (PGHGTRAAAAGPGGRSAP) shows a compositional bias: low complexity. The Radical SAM core domain occupies 191–422 (LDTGPVASLK…ALADELCAQR (232 aa)). 3 residues coordinate [4Fe-4S] cluster: Cys205, Cys209, and Cys212. The TRAM domain occupies 424–497 (EQRLGSTVQV…GVDLVAVPDG (74 aa)).

This sequence belongs to the methylthiotransferase family. RimO subfamily. It depends on [4Fe-4S] cluster as a cofactor.

The protein localises to the cytoplasm. The enzyme catalyses L-aspartate(89)-[ribosomal protein uS12]-hydrogen + (sulfur carrier)-SH + AH2 + 2 S-adenosyl-L-methionine = 3-methylsulfanyl-L-aspartate(89)-[ribosomal protein uS12]-hydrogen + (sulfur carrier)-H + 5'-deoxyadenosine + L-methionine + A + S-adenosyl-L-homocysteine + 2 H(+). In terms of biological role, catalyzes the methylthiolation of an aspartic acid residue of ribosomal protein uS12. The sequence is that of Ribosomal protein uS12 methylthiotransferase RimO from Salinispora arenicola (strain CNS-205).